The following is a 963-amino-acid chain: Collagen alpha-1(I) chain (963 aa).

The disordered stretch occupies residues 1-963 (GPMGPSGPRG…PGPPGPPGPP (963 aa)). Residues 40 to 54 (NGDDGEAGKPGRPGE) show a composition bias toward basic and acidic residues. The residue at position 82 (Ser-82) is a Phosphoserine. 2 stretches are compositionally biased toward low complexity: residues 90 to 106 (DAGP…PGEN) and 129 to 142 (PAGA…TGAA). The segment covering 144–156 (PPGPTGPAGPPGF) has biased composition (pro residues). Residues 190 to 229 (AGAAGPAGNPGADGQPGAKGANGAPGIAGAPGFPGARGPS) show a composition bias toward low complexity. The span at 296–305 (GERGGPGARG) shows a compositional bias: gly residues. 6 stretches are compositionally biased toward low complexity: residues 313 to 337 (AGPK…PGEA), 349 to 375 (KGIT…QDGR), 384 to 403 (ARGQ…AGEP), 482 to 495 (PRGA…DGAK), 555 to 569 (SGPS…ARGA), and 582 to 609 (AGFA…KGDA). Residue Ser-558 is modified to Phosphoserine. Residues 611 to 623 (PPGPAGPTGPPGP) show a composition bias toward pro residues. Composition is skewed to low complexity over residues 638-654 (SAGP…AGRV), 683-692 (ETGPAGRPGE), and 702-726 (AGEK…QGIA). 2 stretches are compositionally biased toward pro residues: residues 767–777 (PPGPVGPPGIA) and 813–828 (AGPP…PGPV). The span at 849-863 (IGPVGARGPAGPQGP) shows a compositional bias: low complexity. Over residues 864 to 878 (RGDKGETGEQGDRGI) the composition is skewed to basic and acidic residues. Residues 897-930 (PGEQGPSGASGPAGPRGPPGSAGAPGKDGINGIP) show a composition bias toward low complexity. A compositionally biased stretch (pro residues) spans 948-963 (VGPPGPPGPPGPPGPP).

This sequence belongs to the fibrillar collagen family. Trimers of one alpha 2(I) and two alpha 1(I) chains. In terms of processing, prolines at the third position of the tripeptide repeating unit (G-X-Y) are hydroxylated in some or all of the chains. As to expression, forms the fibrils of tendon, ligaments and bones. In bones, the fibrils are mineralized with calcium hydroxyapatite.

The protein resides in the secreted. It localises to the extracellular space. Its subcellular location is the extracellular matrix. In terms of biological role, type I collagen is a member of group I collagen (fibrillar forming collagen). This chain is Collagen alpha-1(I) chain, found in Tapirus terrestris (Lowland tapir).